The following is a 468-amino-acid chain: Adenosylhomocysteinase (468 aa).

Positions 57, 132, and 194 each coordinate substrate. NAD(+) is bound at residue 195–197 (TTT). Substrate is bound by residues K224 and D228. NAD(+) contacts are provided by residues N229, 258-263 (GFGDVG), E281, N316, 337-339 (IGH), and N382.

Belongs to the adenosylhomocysteinase family. It depends on NAD(+) as a cofactor.

It is found in the cytoplasm. It catalyses the reaction S-adenosyl-L-homocysteine + H2O = L-homocysteine + adenosine. Its pathway is amino-acid biosynthesis; L-homocysteine biosynthesis; L-homocysteine from S-adenosyl-L-homocysteine: step 1/1. May play a key role in the regulation of the intracellular concentration of adenosylhomocysteine. The sequence is that of Adenosylhomocysteinase from Methylobacterium sp. (strain 4-46).